The sequence spans 495 residues: Carotenoid 3,4-desaturase (495 aa).

Belongs to the carotenoid/retinoid oxidoreductase family.

It catalyses the reaction dihydroisopentenyldehydrorhodopin + A = isopentenyldehydrorhodopin + AH2. The enzyme catalyses dihydrobisanhydrobacterioruberin + A = bisanhydrobacterioruberin + AH2. It functions in the pathway carotenoid biosynthesis. In terms of biological role, involved in the biosynthesis of the acyclic C50 carotenoid bacterioruberin (BR). CrtD is involved in the desaturation reactions that form double bonds at C-3,4 of dihydroisopentenyldehydrorhodopin (DH-IDR) and C-3',4' of dihydrobisanhydrobacterioruberin (DH-BABR) to yield isopentenyld ehydrorhodopin (IDR) and bisanhydrobacterioruberin (BABR), respectively. This chain is Carotenoid 3,4-desaturase, found in Haloarcula japonica (strain ATCC 49778 / DSM 6131 / JCM 7785 / NBRC 101032 / NCIMB 13157 / TR-1).